The chain runs to 337 residues: Holliday junction branch migration complex subunit RuvB (337 aa).

Residues 1–179 form a large ATPase domain (RuvB-L) region; sequence MTHQVSVLHQ…FSFSGRVSYY (179 aa). Residues leucine 18, arginine 19, glycine 60, lysine 63, threonine 64, serine 65, 126–128, arginine 169, tyrosine 179, and arginine 216 each bind ATP; that span reads EDY. Threonine 64 lines the Mg(2+) pocket. The interval 180–250 is small ATPAse domain (RuvB-S); the sequence is SDEDLATILK…VAEKALSMLL (71 aa). Residues 253–337 are head domain (RuvB-H); it reads DWGLNEIDIK…DNLQILGEEK (85 aa). DNA is bound by residues lysine 308 and arginine 313.

The protein belongs to the RuvB family. In terms of assembly, homohexamer. Forms an RuvA(8)-RuvB(12)-Holliday junction (HJ) complex. HJ DNA is sandwiched between 2 RuvA tetramers; dsDNA enters through RuvA and exits via RuvB. An RuvB hexamer assembles on each DNA strand where it exits the tetramer. Each RuvB hexamer is contacted by two RuvA subunits (via domain III) on 2 adjacent RuvB subunits; this complex drives branch migration. In the full resolvosome a probable DNA-RuvA(4)-RuvB(12)-RuvC(2) complex forms which resolves the HJ.

The protein resides in the cytoplasm. The catalysed reaction is ATP + H2O = ADP + phosphate + H(+). Its function is as follows. The RuvA-RuvB-RuvC complex processes Holliday junction (HJ) DNA during genetic recombination and DNA repair, while the RuvA-RuvB complex plays an important role in the rescue of blocked DNA replication forks via replication fork reversal (RFR). RuvA specifically binds to HJ cruciform DNA, conferring on it an open structure. The RuvB hexamer acts as an ATP-dependent pump, pulling dsDNA into and through the RuvAB complex. RuvB forms 2 homohexamers on either side of HJ DNA bound by 1 or 2 RuvA tetramers; 4 subunits per hexamer contact DNA at a time. Coordinated motions by a converter formed by DNA-disengaged RuvB subunits stimulates ATP hydrolysis and nucleotide exchange. Immobilization of the converter enables RuvB to convert the ATP-contained energy into a lever motion, pulling 2 nucleotides of DNA out of the RuvA tetramer per ATP hydrolyzed, thus driving DNA branch migration. The RuvB motors rotate together with the DNA substrate, which together with the progressing nucleotide cycle form the mechanistic basis for DNA recombination by continuous HJ branch migration. Branch migration allows RuvC to scan DNA until it finds its consensus sequence, where it cleaves and resolves cruciform DNA. In Chlamydia felis (strain Fe/C-56) (Chlamydophila felis), this protein is Holliday junction branch migration complex subunit RuvB.